Here is a 289-residue protein sequence, read N- to C-terminus: Protein FraH (289 aa).

The DZANK-type zinc-finger motif lies at 4 to 49 (CPNCNHPNPDGAVQCEACYTPLPATSNCPNCGATVQSDAAFCGQCG). A zinc finger spans residues 18–48 (CEACYTPLPATSNCPNCGATVQSDAAFCGQC). One can recognise an FHA domain in the interval 204 to 260 (VHIGKPNDRIPPDVDVSGFANSEIVSRVHADIRLEGDAHYIEDVGSSNGTYINNLPL).

Putative heterocyst to vegetative cell connection. This chain is Protein FraH (fraH), found in Nostoc sp. (strain PCC 7120 / SAG 25.82 / UTEX 2576).